Reading from the N-terminus, the 95-residue chain is Nucleoid-associated protein MMOB0740 (95 aa).

The protein belongs to the YbaB/EbfC family. As to quaternary structure, homodimer.

The protein localises to the cytoplasm. It is found in the nucleoid. Its function is as follows. Binds to DNA and alters its conformation. May be involved in regulation of gene expression, nucleoid organization and DNA protection. In Mycoplasma mobile (strain ATCC 43663 / 163K / NCTC 11711) (Mesomycoplasma mobile), this protein is Nucleoid-associated protein MMOB0740.